Reading from the N-terminus, the 400-residue chain is Phosphoglycerate kinase (400 aa).

Substrate is bound by residues 23–25 (DLN), Arg38, 61–64 (HFGR), Arg120, and Arg153. ATP contacts are provided by residues Lys203, Glu325, and 355 to 358 (GGDT).

The protein belongs to the phosphoglycerate kinase family. Monomer.

It is found in the cytoplasm. The enzyme catalyses (2R)-3-phosphoglycerate + ATP = (2R)-3-phospho-glyceroyl phosphate + ADP. It participates in carbohydrate degradation; glycolysis; pyruvate from D-glyceraldehyde 3-phosphate: step 2/5. This Methylorubrum extorquens (strain PA1) (Methylobacterium extorquens) protein is Phosphoglycerate kinase.